Here is a 307-residue protein sequence, read N- to C-terminus: MTDSTYDVNRVRAYLQGLQMRIADALGAFDGTPLAADTWRRGPGERLRGGGCTRILEAGGFFERAGIGFSDVAGDALPPSASASRPQLAGRGFEALGVSLVLHPRNPYCPTVHMNVRMLIATKPGEAPVFWFGGGMDLTPIYGFEEDARHFHRTCRAALEPFGAELYPRFKKWCDDYFFLKHRNEARGIGGIFFDDFSELGFERSFEMLQSVGDAFLPSYLPIVERRRDTPYGERERAFQAYRRGRYVEFNLVFDRGTLFGLQSGGRTESILLSMPPTAGWRYDWHPDPGTPEARLQSEFLVPRDWA.

S99 is a substrate binding site. Positions 103 and 113 each coordinate a divalent metal cation. Catalysis depends on H113, which acts as the Proton donor. Residue 115 to 117 (NVR) participates in substrate binding. H152 and H182 together coordinate a divalent metal cation. The important for dimerization stretch occupies residues 247–282 (YVEFNLVFDRGTLFGLQSGGRTESILLSMPPTAGWR). Residue 265–267 (GGR) coordinates substrate.

The protein belongs to the aerobic coproporphyrinogen-III oxidase family. Homodimer. A divalent metal cation serves as cofactor.

The protein localises to the cytoplasm. The enzyme catalyses coproporphyrinogen III + O2 + 2 H(+) = protoporphyrinogen IX + 2 CO2 + 2 H2O. Its pathway is porphyrin-containing compound metabolism; protoporphyrin-IX biosynthesis; protoporphyrinogen-IX from coproporphyrinogen-III (O2 route): step 1/1. In terms of biological role, involved in the heme biosynthesis. Catalyzes the aerobic oxidative decarboxylation of propionate groups of rings A and B of coproporphyrinogen-III to yield the vinyl groups in protoporphyrinogen-IX. The polypeptide is Oxygen-dependent coproporphyrinogen-III oxidase (Burkholderia pseudomallei (strain 1106a)).